The primary structure comprises 505 residues: Glycerol kinase (505 aa).

Threonine 12 contributes to the ADP binding site. The ATP site is built by threonine 12, threonine 13, and serine 14. Threonine 12 provides a ligand contact to sn-glycerol 3-phosphate. An ADP-binding site is contributed by arginine 16. Residues arginine 82, glutamate 83, tyrosine 134, and aspartate 246 each contribute to the sn-glycerol 3-phosphate site. Positions 82, 83, 134, 246, and 247 each coordinate glycerol. Threonine 268 and glycine 312 together coordinate ADP. ATP-binding residues include threonine 268, glycine 312, glutamine 316, and glycine 413. ADP is bound by residues glycine 413 and asparagine 417.

Belongs to the FGGY kinase family.

It catalyses the reaction glycerol + ATP = sn-glycerol 3-phosphate + ADP + H(+). It functions in the pathway polyol metabolism; glycerol degradation via glycerol kinase pathway; sn-glycerol 3-phosphate from glycerol: step 1/1. With respect to regulation, inhibited by fructose 1,6-bisphosphate (FBP). Its function is as follows. Key enzyme in the regulation of glycerol uptake and metabolism. Catalyzes the phosphorylation of glycerol to yield sn-glycerol 3-phosphate. The chain is Glycerol kinase from Beutenbergia cavernae (strain ATCC BAA-8 / DSM 12333 / CCUG 43141 / JCM 11478 / NBRC 16432 / NCIMB 13614 / HKI 0122).